Here is a 119-residue protein sequence, read N- to C-terminus: Large ribosomal subunit protein uL18 (119 aa).

The disordered stretch occupies residues 1–25; sequence MITKIDKNKVRKKRHARVRSKISGT. Positions 9–20 are enriched in basic residues; that stretch reads KVRKKRHARVRS.

It belongs to the universal ribosomal protein uL18 family. In terms of assembly, part of the 50S ribosomal subunit; part of the 5S rRNA/L5/L18/L25 subcomplex. Contacts the 5S and 23S rRNAs.

Its function is as follows. This is one of the proteins that bind and probably mediate the attachment of the 5S RNA into the large ribosomal subunit, where it forms part of the central protuberance. The sequence is that of Large ribosomal subunit protein uL18 from Listeria monocytogenes serotype 4b (strain CLIP80459).